The chain runs to 554 residues: MGDRRTISLPESDKILQYCSEIRMSPTSLLPSPSHSVANNLSGSVYTFCTEDNLEQCITYIDQELRTIGFPTVQAVSKNGEGRKLHLVSIINCIYELLQRNSQTMRSNEEVETQLLKINGDLEYLQSIHQRQKDQLEATKRENCALQERDRQMQCKNRNLLQLLKNEKEEVQKLQNIIASRSTQYNHSVKRKEREYNKLKERLYQLVMDKRDKKISIDVLNYVGRADGKRSSWRTGKTDAKNEEEMYKVLLNDYEQRQKQLMVENVELKKVLQQMKKEMISIVSQRKTKEKLEDSTGTVTSDIEEEIADSSKENLSELSCEAVREQLISSIRQQWRILKSHMEKLDNQACLVNVPTPDENGLIARAEHEQELDKLISEIQQCKETIRSQQQLLKQQLSVPRDDDTSKLLQDCYLLEDKERLQEEWKLFNAQKKNFEKERRNFTEAAIRLGHEKKVFEEDRAAWLKHQFLNMTVFSDHKNLEERKVPGVHFSSEQDNCRLHSRPHDKVLASSGDYSRRPSKALPITSSSKHSLTQIESISWRDSSISPNDTDFLN.

Coiled coils occupy residues 122–287 (LEYL…SQRK) and 359–449 (ENGL…AIRL). The tract at residues 508–528 (LASSGDYSRRPSKALPITSSS) is disordered.

This sequence belongs to the ADIP family. Interacts with WRAP73.

The protein resides in the cell junction. It is found in the adherens junction. It localises to the cytoplasm. The protein localises to the cytoskeleton. Its subcellular location is the microtubule organizing center. The protein resides in the centrosome. It is found in the centriolar satellite. In terms of biological role, belongs to an adhesion system, which plays a role in the organization of homotypic, interneuronal and heterotypic cell-cell adherens junctions (AJs). Involved in cell movement. Acts as a centrosome maturation factor, probably by maintaining the integrity of the pericentriolar material and proper microtubule nucleation at mitotic spindle poles. The function seems to implicate at least in part WRAP73; the SSX2IP:WRAP73 complex is proposed to act as regulator of spindle anchoring at the mitotic centrosome. The chain is Afadin- and alpha-actinin-binding protein A (ssx2ip-a) from Xenopus laevis (African clawed frog).